Consider the following 35-residue polypeptide: Photosystem II reaction center protein M (35 aa).

Residues 5-25 (ILAVIATALFIIIPTSFLLIL) form a helical membrane-spanning segment.

Belongs to the PsbM family. In terms of assembly, PSII is composed of 1 copy each of membrane proteins PsbA, PsbB, PsbC, PsbD, PsbE, PsbF, PsbH, PsbI, PsbJ, PsbK, PsbL, PsbM, PsbT, PsbX, PsbY, PsbZ, Psb30/Ycf12, at least 3 peripheral proteins of the oxygen-evolving complex and a large number of cofactors. It forms dimeric complexes.

The protein resides in the plastid. The protein localises to the chloroplast thylakoid membrane. Its function is as follows. One of the components of the core complex of photosystem II (PSII). PSII is a light-driven water:plastoquinone oxidoreductase that uses light energy to abstract electrons from H(2)O, generating O(2) and a proton gradient subsequently used for ATP formation. It consists of a core antenna complex that captures photons, and an electron transfer chain that converts photonic excitation into a charge separation. This subunit is found at the monomer-monomer interface. The protein is Photosystem II reaction center protein M of Staurastrum punctulatum (Green alga).